We begin with the raw amino-acid sequence, 104 residues long: PLAT domain-containing protein 3 (104 aa).

Positions 1 to 104 (MSLRLYDSYG…LARDASPYEL (104 aa)) constitute a PLAT domain.

The protein is PLAT domain-containing protein 3 of Arabidopsis thaliana (Mouse-ear cress).